Reading from the N-terminus, the 293-residue chain is PHO85 cyclin PHO80 (293 aa).

Phosphoserine; by PHO85 occurs at positions 234 and 267. The segment covering 254 to 272 (ESGSQTTQLKGSSSPNSHS) has biased composition (polar residues). The interval 254–293 (ESGSQTTQLKGSSSPNSHSSQKRYSEAKDAHIYNKRSKPD) is disordered. Residues 276 to 293 (RYSEAKDAHIYNKRSKPD) show a composition bias toward basic and acidic residues.

It belongs to the cyclin family. PHO80 subfamily. Forms a cyclin-CDK complex with PHO85. PHO80-PHO85 forms a stable complex with its inhibitor PHO81 under both high- and low-phosphate conditions, but PHO81 only inhibits the kinase upon phosphate starvation. Interacts with transcription factor PHO4. Post-translationally, phosphorylation of Ser-267 by PHO85 is required to form an active cyclin-kinase complex and for function.

It localises to the cytoplasm. It is found in the nucleus. Inhibited by the CDK inhibitor (CKI) PHO81 in response to phosphate starvation. In terms of biological role, cyclin partner of the cyclin-dependent kinase (CDK) PHO85. Negatively regulates the expression of phosphate-starvation-responsive genes under phosphate-rich conditions. The PHO80-PHO85 cyclin-CDK holoenzyme phosphorylates and inactivates the transcription factor PHO4, by preventing its association with the transcription factor PHO2 and the nuclear import receptor PSE1, and by promoting association with the nuclear export receptor MSN5, excluding PHO4 from the nucleus. PHO80-PHO85 phosphorylates and inactivates protein kinase RIM15 by retaining it in the cytoplasm, antagonizing RIM15-induced entry into stationary phase. PHO80-PHO85 also phosphorylates and inactivates the calcineurin-responsive transcription factor CRZ1, linking PHO85 to calcium signaling. This chain is PHO85 cyclin PHO80 (PHO80), found in Saccharomyces cerevisiae (strain ATCC 204508 / S288c) (Baker's yeast).